The primary structure comprises 507 residues: ATP synthase subunit alpha, chloroplastic (507 aa).

An ATP-binding site is contributed by 170-177; that stretch reads GDRQTGKT.

The protein belongs to the ATPase alpha/beta chains family. In terms of assembly, F-type ATPases have 2 components, CF(1) - the catalytic core - and CF(0) - the membrane proton channel. CF(1) has five subunits: alpha(3), beta(3), gamma(1), delta(1), epsilon(1). CF(0) has four main subunits: a, b, b' and c.

It is found in the plastid. It localises to the chloroplast thylakoid membrane. It carries out the reaction ATP + H2O + 4 H(+)(in) = ADP + phosphate + 5 H(+)(out). In terms of biological role, produces ATP from ADP in the presence of a proton gradient across the membrane. The alpha chain is a regulatory subunit. This is ATP synthase subunit alpha, chloroplastic from Eucalyptus globulus subsp. globulus (Tasmanian blue gum).